We begin with the raw amino-acid sequence, 308 residues long: Serpentine receptor class V-1 (308 aa).

7 consecutive transmembrane segments (helical) span residues 15-35, 46-68, 88-108, 135-155, 184-204, 222-242, and 256-276; these read VSTAISLVCLPINILFVYILF, PFFRLCIHLSIADILMELFSTFF, VVPIAGMQYLGHAQAFGIIFI, LLLIQWITPLFFMAPLFSTDF, AMVDGILINLIVLLLYGAIFI, LALSAFIIFICYLALGVCSLL, and TMWFVVNDVLCNSSALVLLAL.

It belongs to the nematode receptor-like protein srv family.

It localises to the membrane. The chain is Serpentine receptor class V-1 (srv-1) from Caenorhabditis elegans.